The primary structure comprises 324 residues: uncharacterized protein (324 aa).

The HTH lysR-type domain maps to 6-63 (LKYRELKIISVIAASENISHAATVLGIAQANVSKYLADFESKVGLKVFDRTTRQLMLT). Residues 23–42 (ISHAATVLGIAQANVSKYLA) constitute a DNA-binding region (H-T-H motif).

It belongs to the LysR transcriptional regulatory family.

This is an uncharacterized protein from Escherichia coli (strain K12).